The following is a 35-amino-acid chain: Mu-theraphotoxin-Ca2a (35 aa).

Intrachain disulfides connect cysteine 2–cysteine 17, cysteine 9–cysteine 24, and cysteine 16–cysteine 31.

It belongs to the neurotoxin 10 (Hwtx-1) family. 10 (haplotoxin-1) subfamily. As to expression, expressed by the venom gland.

The protein localises to the secreted. Its function is as follows. Potently inhibits Nav1.7/SCN9A (IC(50)=98.1 nM), and moderately inhibits Nav1.2/SCN2A (IC(50)=216.3 nM), Nav1.6/SCN8A (IC(50)=313.6 nM), and Nav1.3/SCN3A (IC(50)=491.3 nM). Hyperpolarizes the slow inactivation, but does not alter the voltage-dependent activation or fast inactivation of Nav1.7/SCN9A. Binds with Nav1.7/SCN9A at the extracellular S3-S4 linker of domain II (site 4). In vivo, exhibits dose-dependent analgesic efficacy by reducing pain responses in rodent models of formalin-induced paw licking, hot plate test, and acetic acid-induced writhing. The sequence is that of Mu-theraphotoxin-Ca2a from Cyriopagopus albostriatus (Cambodian tiger tarantula).